Reading from the N-terminus, the 526-residue chain is MSNLFDSDSPTNLAEYSVSELSGSIKRTIETAFDQVRVRGEISGYRGPHSSGHAYFALKDDRARIDAVIWKGTFSRLKFRPEEGMEVIATGKVTTFPGSSKYQIVIETLEPAGAGALMALIEERKRRLGAEGLFDAARKKRLPFMPHVIGVVTSPTGAVIRDILHRISDRFPVHVLVWPVKVQGEGSGEEVANAIRGFNALEPASAISRPDVLIVARGGGSLEDLWSFNDEIVVRAAAESRIPLISAVGHETDWTLIDYAADVRAPTPTGAAEMAVPVKAELEAQAAALAARLQGCMNRQMDQRRQSVRSLMRAFPSLDQLLALPRRRFDEAAAGLGRGLELNTINKRRGFERVIAHLRPDLLSGRISERRQMLNERMVRAERMVERLIDRSASRVERAEAILASLPARLKAQTDRSRERLGNLTRHADTAIRHQLTRARAELSAQDRVLQSLSYKNVLRRGYAVIRDEDNRPVSQAAALSAGMGIAIEFADGRIGAMTTEGGTPPGGAKKRSTKPAEPTKQGSLF.

The disordered stretch occupies residues Ala-497 to Phe-526.

It belongs to the XseA family. Heterooligomer composed of large and small subunits.

It localises to the cytoplasm. It carries out the reaction Exonucleolytic cleavage in either 5'- to 3'- or 3'- to 5'-direction to yield nucleoside 5'-phosphates.. Bidirectionally degrades single-stranded DNA into large acid-insoluble oligonucleotides, which are then degraded further into small acid-soluble oligonucleotides. The protein is Exodeoxyribonuclease 7 large subunit of Rhizobium etli (strain ATCC 51251 / DSM 11541 / JCM 21823 / NBRC 15573 / CFN 42).